The chain runs to 471 residues: Adenosylhomocysteinase (471 aa).

Substrate-binding residues include Thr58, Asp133, and Glu195. NAD(+) is bound at residue 196-198; it reads TTT. The substrate site is built by Lys225 and Asp229. NAD(+) contacts are provided by residues Asn230, 259–264, Glu282, Asn317, 338–340, and Asn383; these read GFGDVG and IGH.

The protein belongs to the adenosylhomocysteinase family. NAD(+) serves as cofactor.

It is found in the cytoplasm. It carries out the reaction S-adenosyl-L-homocysteine + H2O = L-homocysteine + adenosine. It participates in amino-acid biosynthesis; L-homocysteine biosynthesis; L-homocysteine from S-adenosyl-L-homocysteine: step 1/1. May play a key role in the regulation of the intracellular concentration of adenosylhomocysteine. The protein is Adenosylhomocysteinase of Rhodopseudomonas palustris (strain BisB5).